A 193-amino-acid chain; its full sequence is Proteasome subunit beta 1 (193 aa).

Residues 1–4 constitute a propeptide, removed in mature form; by autocatalysis; it reads MPGA. Thr5 functions as the Nucleophile in the catalytic mechanism.

This sequence belongs to the peptidase T1B family. In terms of assembly, the 20S proteasome core is composed of 14 alpha and 14 beta subunits that assemble into four stacked heptameric rings, resulting in a barrel-shaped structure. The two inner rings, each composed of seven catalytic beta subunits, are sandwiched by two outer rings, each composed of seven alpha subunits. The catalytic chamber with the active sites is on the inside of the barrel. Has a gated structure, the ends of the cylinder being occluded by the N-termini of the alpha-subunits. Is capped at one or both ends by the proteasome regulatory ATPase, PAN.

The protein resides in the cytoplasm. The enzyme catalyses Cleavage of peptide bonds with very broad specificity.. The formation of the proteasomal ATPase PAN-20S proteasome complex, via the docking of the C-termini of PAN into the intersubunit pockets in the alpha-rings, triggers opening of the gate for substrate entry. Interconversion between the open-gate and close-gate conformations leads to a dynamic regulation of the 20S proteasome proteolysis activity. In terms of biological role, component of the proteasome core, a large protease complex with broad specificity involved in protein degradation. This chain is Proteasome subunit beta 1, found in Cenarchaeum symbiosum (strain A).